A 215-amino-acid polypeptide reads, in one-letter code: Cytochrome b6 (215 aa).

Residues 32-52 (IFYCLGGITLTCFLVQVATGF) form a helical membrane-spanning segment. Cysteine 35 is a heme c binding site. Positions 86 and 100 each coordinate heme b. The next 3 helical transmembrane spans lie at 90-110 (ASMM…TGGF), 116-136 (LTWV…VTGY), and 186-206 (LHTF…FPMI). Heme b contacts are provided by histidine 187 and histidine 202.

It belongs to the cytochrome b family. PetB subfamily. The 4 large subunits of the cytochrome b6-f complex are cytochrome b6, subunit IV (17 kDa polypeptide, PetD), cytochrome f and the Rieske protein, while the 4 small subunits are PetG, PetL, PetM and PetN. The complex functions as a dimer. Requires heme b as cofactor. Heme c serves as cofactor.

It localises to the plastid. The protein resides in the chloroplast thylakoid membrane. In terms of biological role, component of the cytochrome b6-f complex, which mediates electron transfer between photosystem II (PSII) and photosystem I (PSI), cyclic electron flow around PSI, and state transitions. This Agrostis stolonifera (Creeping bentgrass) protein is Cytochrome b6.